A 192-amino-acid polypeptide reads, in one-letter code: Thymidine kinase (192 aa).

ATP-binding positions include 9–16 and 87–90; these read SAMNAGKS and DECQ. The Proton acceptor role is filled by Glu88. The Zn(2+) site is built by Cys145, Cys147, Cys182, and His185.

The protein belongs to the thymidine kinase family. As to quaternary structure, homotetramer.

Its subcellular location is the cytoplasm. The catalysed reaction is thymidine + ATP = dTMP + ADP + H(+). The sequence is that of Thymidine kinase from Photobacterium profundum (strain SS9).